The sequence spans 229 residues: Glucose-induced degradation protein 8-B homolog (229 aa).

A LisH domain is found at 26 to 58; it reads QRADMNRLIMNYLVTEGFKEAAEKFRMESGIEP. A CTLH domain is found at 64-121; sequence SLDERIKIREMVLKGQIQEAIALINSLHPELLDTNRYLYFHLQQQHLIELIRLRETEA.

Identified in the CTLH complex that contains at least MAEA, RMND5A (or alternatively its paralog RMND5B), GID8, WDR26, and RANBP9 and/or RANBP10. Interacts with CTNNB1.

The protein localises to the cytoplasm. The protein resides in the nucleus. In terms of biological role, core component of the CTLH E3 ubiquitin-protein ligase complex that selectively accepts ubiquitin from UBE2H and mediates ubiquitination and subsequent proteasomal degradation of target proteins. Acts as a positive regulator of Wnt signaling pathway by promoting beta-catenin (CTNNB1) nuclear accumulation. Required for normal Wnt signaling and normal dorsoventral patterning during embryogenesis. This is Glucose-induced degradation protein 8-B homolog (gid8b) from Danio rerio (Zebrafish).